We begin with the raw amino-acid sequence, 363 residues long: Probable tRNA pseudouridine synthase D (363 aa).

Asp-82 functions as the Nucleophile in the catalytic mechanism. Residues 151-363 form the TRUD domain; sequence YLPAYIGYQR…IARTDPRLFT (213 aa).

Belongs to the pseudouridine synthase TruD family.

It carries out the reaction uridine(13) in tRNA = pseudouridine(13) in tRNA. In terms of biological role, could be responsible for synthesis of pseudouridine from uracil-13 in transfer RNAs. This chain is Probable tRNA pseudouridine synthase D, found in Sulfurisphaera tokodaii (strain DSM 16993 / JCM 10545 / NBRC 100140 / 7) (Sulfolobus tokodaii).